A 350-amino-acid polypeptide reads, in one-letter code: MSKGLPEARTDAAMSELVPEPRPKPAVPMKPVSINSNLLGYIGIDTIIEQMRKKTMKTGFDFNIMVVGQSGLGKSTLVNTLFKSQVSRKASSWNREEKIPKTVEIKAIGHVIEEGGVKMKLTVIDTPGFGDQINNENCWEPIEKYINEQYEKFLKEEVNIARKKRIPDTRVHCCLYFISPTGHSLRPLDLEFMKHLSKVVNIIPVIAKADTMTLEEKSEFKQRVRKELEVNGIEFYPQKEFDEDLEDKTENDKIRQESMPFAVVGSDKEYQVNGKRVLGRKTPWGIIEVENLNHCEFALLRDFVIRTHLQDLKEVTHNIHYETYRAKRLNDNGGLPPVSVDTEESHDSNP.

A compositionally biased stretch (basic and acidic residues) spans 1 to 10 (MSKGLPEART). Residues 1 to 29 (MSKGLPEARTDAAMSELVPEPRPKPAVPM) form a disordered region. The Septin-type G domain maps to 58–331 (TGFDFNIMVV…ETYRAKRLND (274 aa)). The segment at 68–75 (GQSGLGKS) is G1 motif. 68–75 (GQSGLGKS) contributes to the GTP binding site. Phosphoserine is present on serine 91. Threonine 102 contacts GTP. Residues 125-128 (DTPG) are G3 motif. The interval 207-210 (AKAD) is G4 motif. GTP is bound by residues 208–216 (KADTMTLEE), glycine 265, and arginine 280. The tract at residues 328–350 (RLNDNGGLPPVSVDTEESHDSNP) is disordered.

The protein belongs to the TRAFAC class TrmE-Era-EngA-EngB-Septin-like GTPase superfamily. Septin GTPase family. As to quaternary structure, septins polymerize into heterooligomeric protein complexes that form filaments, and can associate with cellular membranes, actin filaments and microtubules. GTPase activity is required for filament formation. Phosphorylated by PKG on serine residues. Phosphorylated by PKG on Ser-91. In terms of tissue distribution, expressed in the brain including the cerebrum, hippocampus and cerebellum (at protein level).

Its subcellular location is the cytoplasm. It localises to the cytoskeleton. The protein localises to the synapse. Filament-forming cytoskeletal GTPase. May play a role in cytokinesis (Potential). The chain is Neuronal-specific septin-3 from Mus musculus (Mouse).